Reading from the N-terminus, the 605-residue chain is Isocitrate dehydrogenase kinase/phosphatase (605 aa).

ATP is bound by residues 327 to 333 (APGIKGL) and Lys348. The active site involves Asp383.

It belongs to the AceK family.

It localises to the cytoplasm. It carries out the reaction L-seryl-[isocitrate dehydrogenase] + ATP = O-phospho-L-seryl-[isocitrate dehydrogenase] + ADP + H(+). Bifunctional enzyme which can phosphorylate or dephosphorylate isocitrate dehydrogenase (IDH) on a specific serine residue. This is a regulatory mechanism which enables bacteria to bypass the Krebs cycle via the glyoxylate shunt in response to the source of carbon. When bacteria are grown on glucose, IDH is fully active and unphosphorylated, but when grown on acetate or ethanol, the activity of IDH declines drastically concomitant with its phosphorylation. This Burkholderia orbicola (strain MC0-3) protein is Isocitrate dehydrogenase kinase/phosphatase.